We begin with the raw amino-acid sequence, 229 residues long: Deoxyribose-phosphate aldolase (229 aa).

D84 acts as the Proton donor/acceptor in catalysis. K146 serves as the catalytic Schiff-base intermediate with acetaldehyde. The active-site Proton donor/acceptor is the K188.

This sequence belongs to the DeoC/FbaB aldolase family. DeoC type 1 subfamily.

The protein resides in the cytoplasm. The enzyme catalyses 2-deoxy-D-ribose 5-phosphate = D-glyceraldehyde 3-phosphate + acetaldehyde. It participates in carbohydrate degradation; 2-deoxy-D-ribose 1-phosphate degradation; D-glyceraldehyde 3-phosphate and acetaldehyde from 2-deoxy-alpha-D-ribose 1-phosphate: step 2/2. Functionally, catalyzes a reversible aldol reaction between acetaldehyde and D-glyceraldehyde 3-phosphate to generate 2-deoxy-D-ribose 5-phosphate. This Pyrobaculum neutrophilum (strain DSM 2338 / JCM 9278 / NBRC 100436 / V24Sta) (Thermoproteus neutrophilus) protein is Deoxyribose-phosphate aldolase.